The chain runs to 92 residues: Small ribosomal subunit protein bS20 (92 aa).

Residues 1–28 are disordered; it reads MANTASAEKRNRQAQKRRARNVQVRTGV.

Belongs to the bacterial ribosomal protein bS20 family.

Its function is as follows. Binds directly to 16S ribosomal RNA. The sequence is that of Small ribosomal subunit protein bS20 from Anaeromyxobacter dehalogenans (strain 2CP-C).